Consider the following 468-residue polypeptide: Transcription factor ste11 (468 aa).

The disordered stretch occupies residues 1–21 (MSASLTAEQKDQKSSVKRPLN). A DNA-binding region (HMG box) is located at residues 16 to 80 (VKRPLNSFML…KHMLENPEYK (65 aa)). The residue at position 173 (threonine 173) is a Phosphothreonine. Phosphoserine occurs at positions 209, 211, and 218. 2 stretches are compositionally biased toward polar residues: residues 249–263 (PSLE…SNCS) and 274–285 (GTVSEQSNSDSP). Positions 249-290 (PSLEANLPQNSSNCSARRVPKFDSKGTVSEQSNSDSPELSAD) are disordered.

In terms of processing, phosphorylation results in inactivation.

The protein resides in the nucleus. Its subcellular location is the cytoplasm. Functionally, key transcription factor for sexual development. Activates the transcription of the matp, matm, mei2, mfm, ste6 and rgs1 genes. Binds specifically to a DNA fragment carrying a 10-base motif 5'-TTCTTTGTTY-3'. The protein is Transcription factor ste11 (ste11) of Schizosaccharomyces pombe (strain 972 / ATCC 24843) (Fission yeast).